The chain runs to 492 residues: MASTVRPSFSLGNETLKVPLALFALNRQRLCERLRKNGAVQAGSAVVLQGGEEMQRYCTDTSIIFRQESFFHWAFGVIESGCYGVIDVDTGKSTLFVPRLPASYATWMGKIHSKEHFKEKYAVDDVQYADEIASVLTSRNPSVLLTLRGVNTDSGNVCREASFEGISKFTVNNTILHPEIVECRVFKTDMELEVLRYTNRISSEAHREVMKAVKVGMKEYEMESLFQHYCYSKGGMRHTSYTCICCSGENAAVLHYGHAGAPNDRTIKDGDICLFDMGGEYYCFASDITCSFPANGKFTDDQKAIYEAVLRSCRTVMSTMKPGVWWPDMHRLADRIHLEELTRIGLLSGSVDAMLQVHLGAVFMPHGLGHFLGLDVHDVGGYPEGVERIDEPGLRSLRTARHLEPGMVLTVEPGIYFIDHLLDQALADPAQACFFNQEVLQRFRNFGGVRIEEDVVVTDSGMELLTCVPRTVEEIEACMAGCDKALAPSGPK.

An N-acetylalanine modification is found at alanine 2. Serine 167 carries the post-translational modification Phosphoserine. Histidine 255 is a binding site for a dipeptide. Mn(2+) is bound by residues aspartate 276, aspartate 287, and histidine 370. Residue aspartate 287 participates in a dipeptide binding. A dipeptide-binding residues include histidine 377 and arginine 398. The Mn(2+) site is built by glutamate 412 and glutamate 452.

The protein belongs to the peptidase M24B family. Eukaryotic-type prolidase subfamily. In terms of assembly, homodimer. The cofactor is Mn(2+).

It carries out the reaction Xaa-L-Pro dipeptide + H2O = an L-alpha-amino acid + L-proline. In terms of biological role, dipeptidase that catalyzes the hydrolysis of dipeptides with a prolyl (Xaa-Pro) or hydroxyprolyl residue in the C-terminal position. The preferred dipeptide substrate is Gly-Pro, but other Xaa-Pro dipeptides, such as Ala-Pro, Met-Pro, Phe-Pro, Val-Pro and Leu-Pro, can be cleaved. Plays an important role in collagen metabolism because the high level of iminoacids in collagen. The sequence is that of Xaa-Pro dipeptidase (Pepd) from Rattus norvegicus (Rat).